A 318-amino-acid polypeptide reads, in one-letter code: Aspartate carbamoyltransferase catalytic subunit (318 aa).

2 residues coordinate carbamoyl phosphate: arginine 58 and threonine 59. Lysine 86 is a binding site for L-aspartate. Arginine 108, histidine 141, and glutamine 144 together coordinate carbamoyl phosphate. L-aspartate-binding residues include arginine 174 and arginine 226. Residues glycine 270 and proline 271 each coordinate carbamoyl phosphate.

It belongs to the aspartate/ornithine carbamoyltransferase superfamily. ATCase family. As to quaternary structure, heterododecamer (2C3:3R2) of six catalytic PyrB chains organized as two trimers (C3), and six regulatory PyrI chains organized as three dimers (R2).

It catalyses the reaction carbamoyl phosphate + L-aspartate = N-carbamoyl-L-aspartate + phosphate + H(+). The protein operates within pyrimidine metabolism; UMP biosynthesis via de novo pathway; (S)-dihydroorotate from bicarbonate: step 2/3. In terms of biological role, catalyzes the condensation of carbamoyl phosphate and aspartate to form carbamoyl aspartate and inorganic phosphate, the committed step in the de novo pyrimidine nucleotide biosynthesis pathway. The chain is Aspartate carbamoyltransferase catalytic subunit from Lactobacillus acidophilus (strain ATCC 700396 / NCK56 / N2 / NCFM).